Consider the following 343-residue polypeptide: Heat-inducible transcription repressor HrcA (343 aa).

It belongs to the HrcA family.

Its function is as follows. Negative regulator of class I heat shock genes (grpE-dnaK-dnaJ and groELS operons). Prevents heat-shock induction of these operons. This chain is Heat-inducible transcription repressor HrcA, found in Bacillus pumilus (strain SAFR-032).